Consider the following 386-residue polypeptide: Small ribosomal subunit protein mS31 (386 aa).

It belongs to the mitochondrion-specific ribosomal protein mS31 family. As to quaternary structure, component of the mitochondrial ribosome small subunit (28S) which comprises a 12S rRNA and about 30 distinct proteins.

It localises to the mitochondrion. This Bos taurus (Bovine) protein is Small ribosomal subunit protein mS31 (MRPS31).